A 256-amino-acid polypeptide reads, in one-letter code: MAVISMKQLLEAGVHFGHQTRRWNPKMAKYIFTERNGIHVIDLQQTVKLADQAYEFVRDAAANDAVILFVGTKKQAAEAVAEEAKRAGQYFINHRWLGGTLTNWGTIQKRIARLKEIKRMEEEGTFELLPKKEVALLNKQRARLEKFLGGIEDMPRIPDVMYVVDPHKEQIAVKEAKKLGIPVVAMVDTNADPDDIDVIIPANDDAIRAVKLITSKLADAVIEGRQGEDADVDFAQEAQADSIEEIVEVVEGSNND.

It belongs to the universal ribosomal protein uS2 family.

In Streptococcus agalactiae serotype III (strain NEM316), this protein is Small ribosomal subunit protein uS2.